The chain runs to 300 residues: Cation-efflux pump FieF (300 aa).

A helical transmembrane segment spans residues 24–44 (LLIKIFAWWYTGSVSILAALV). Residues aspartate 45 and aspartate 49 each coordinate Zn(2+). Helical transmembrane passes span 82–102 (AALA…LTSI) and 114–134 (PGVG…LVTF). The Zn(2+) site is built by histidine 153 and aspartate 157. 2 consecutive transmembrane segments (helical) span residues 156-176 (SDVM…YGWH) and 178-198 (ADAL…LRMG).

This sequence belongs to the cation diffusion facilitator (CDF) transporter (TC 2.A.4) family. FieF subfamily. As to quaternary structure, homodimer.

It is found in the cell inner membrane. The enzyme catalyses Zn(2+)(in) + H(+)(out) = Zn(2+)(out) + H(+)(in). It carries out the reaction Cd(2+)(in) + H(+)(out) = Cd(2+)(out) + H(+)(in). It catalyses the reaction Fe(2+)(in) + H(+)(out) = Fe(2+)(out) + H(+)(in). Its function is as follows. Divalent metal cation transporter which exports Zn(2+), Cd(2+) and possibly Fe(2+). May be involved in zinc and iron detoxification by efflux. The sequence is that of Cation-efflux pump FieF from Salmonella choleraesuis (strain SC-B67).